The chain runs to 1105 residues: Ran-binding protein 6 (1105 aa).

Ala2 bears the N-acetylalanine mark. HEAT repeat units follow at residues 219-257 (FKDFADLLPGILQAVNDSCYQDDDSVLESLVEIADTVPK), 361-399 (KVVLPMTKEHIMQMLQSPDWKCRHAGLMALSAIGEGCHQ), 402-440 (EPILDETVNSVLLFLQDPHPRVRAAACTTLGQMATDFAP), 444-483 (KKFHEIVITALLRTMENQGNQRVQSHAASALVIFIEDCPK), 866-905 (LPWFEQLLPLIVNLICSSRPWPDRQWGLCIFDDIIEHCSP), 908-946 (FKYVEYFRWPMLLNMRDNNPEVRQAAAYGLGVMAQFGGD), and 949-987 (RSLCSEAVPLLVKVIKCANSKTKKNVIATENCISAIGKI).

The protein belongs to the importin beta family.

The protein resides in the cytoplasm. The protein localises to the nucleus. Functionally, may function in nuclear protein import as nuclear transport receptor. This is Ran-binding protein 6 (Ranbp6) from Mus musculus (Mouse).